The chain runs to 361 residues: S-adenosylmethionine decarboxylase proenzyme (361 aa).

Residues E13 and E16 contribute to the active site. S73 functions as the Schiff-base intermediate with substrate; via pyruvic acid in the catalytic mechanism. A Pyruvic acid (Ser); by autocatalysis modification is found at S73. Catalysis depends on C87, which acts as the Proton donor; for catalytic activity. Active-site proton acceptor; for processing activity residues include S236 and H249.

Belongs to the eukaryotic AdoMetDC family. Pyruvate serves as cofactor. Is synthesized initially as an inactive proenzyme. Formation of the active enzyme involves a self-maturation process in which the active site pyruvoyl group is generated from an internal serine residue via an autocatalytic post-translational modification. Two non-identical subunits are generated from the proenzyme in this reaction, and the pyruvate is formed at the N-terminus of the alpha chain, which is derived from the carboxyl end of the proenzyme. The post-translation cleavage follows an unusual pathway, termed non-hydrolytic serinolysis, in which the side chain hydroxyl group of the serine supplies its oxygen atom to form the C-terminus of the beta chain, while the remainder of the serine residue undergoes an oxidative deamination to produce ammonia and the pyruvoyl group blocking the N-terminus of the alpha chain.

It catalyses the reaction S-adenosyl-L-methionine + H(+) = S-adenosyl 3-(methylsulfanyl)propylamine + CO2. It functions in the pathway amine and polyamine biosynthesis; S-adenosylmethioninamine biosynthesis; S-adenosylmethioninamine from S-adenosyl-L-methionine: step 1/1. The polypeptide is S-adenosylmethionine decarboxylase proenzyme (SAMDC1) (Nicotiana sylvestris (Wood tobacco)).